An 838-amino-acid polypeptide reads, in one-letter code: MTADYSFLKSFAEYIIDKLGKDTKVQIILPNNFSCLELKKILTDKYKIKLPIIIPFNSLISKKIDSDYISKIEELLILSSIITEYKELPLNKNESLKAAELLRKLFNDLIINNIDIKLIEVYNNSNYWQKIYKFLEYCFLRWQEEISFTQKQTKAVYKLKLLQEEIIKIKTGHKQVILAGIFKPNVFFKRFEEELKDYIIHYNPASKQISDGISYYEPNDIYEETKQISYICSRNKDRRIAIVTNNNKLKRVYCNFLDKYEDLLGNDLRLTNIGELLTSIIKILCNNFDLKLLFLLLKNPLINCPTVQQLELMLSNKNRFISSPKYLLQLQFDNEDIREYCRNLIDILFTDTPHNIQAILTLTKEITEKLLPTIWEKEGGAELLEFLTNLTAYSKYINSTDKKDFPKIFSFLLSNIKYYKNTDAASIIIGRPEDLALCEFDLIILPHFNNENWTLSAKAHPWLSKQALQILNIDYDEIAPTLYSDYFNLFLQNKQIVILNAKKYDGKLSVPSNLFLKLEKGSVSPRDLITGSSNYMDTVVKPRYDKSIEIHSPSFPTTLSVTEIETLIKNPYGFYAKKILGLRKKDHIWEEPKISDFGNLIHKVLEEYSKNYDKQYINLNLLDKQNALINIGNHILYSTILPSYTKKTWQIKLTAFSKAFILFDIERRKNCKEIYFETKGELRLNIVGQDIKIIGIADRIEISKSNNITILDYKTGTIPTKKEIELGLSPQLIIESLMLLENGFTKCNSLSLLCHPQPLLCYSRESRNPVINNNITIAYVKITSTEPYVHTTEITLSIETLNRHKAGLVKLLEHYITNQFFSYDLNLSKYNDYLHLSR.

This is an uncharacterized protein from Rickettsia conorii (strain ATCC VR-613 / Malish 7).